The following is a 362-amino-acid chain: Putative F-box/kelch-repeat protein At3g20710 (362 aa).

An F-box domain is found at 1 to 50 (MMMSNLPKDLVEEILSRVPFKYLRAIRSTCKNWYDLSKNRSFANKNIDKA). Kelch repeat units follow at residues 150-201 (YDKS…VSLN) and 293-341 (IYCR…YFKS).

This is Putative F-box/kelch-repeat protein At3g20710 from Arabidopsis thaliana (Mouse-ear cress).